A 699-amino-acid polypeptide reads, in one-letter code: SHC SH2 domain-binding protein 1 homolog A (699 aa).

3 PbH1 repeats span residues 480 to 502 (SAELLMKYSDLYGAKGAGMEIYP), 503 to 524 (GSKCTLIGNGIHHCRDGILIKD), and 532 to 554 (IPKITMENNVIHNNEGYAVVLVK). Positions 603-627 (AVEHTNNLEKDQGNLAIAKEEVECE) form a coiled coil.

Its subcellular location is the midbody. The protein localises to the cytoplasm. It localises to the cytoskeleton. The protein resides in the spindle. Functionally, may play a role in signaling pathways governing cellular proliferation. In Xenopus laevis (African clawed frog), this protein is SHC SH2 domain-binding protein 1 homolog A (shcbp1-a).